The chain runs to 295 residues: Virginiamycin B lyase (295 aa).

Residue H228 participates in substrate binding. E268 contacts Mg(2+). H270 serves as the catalytic Proton acceptor. E285 is a binding site for Mg(2+).

The protein belongs to the Vgb family. In terms of assembly, monomer. The cofactor is Mg(2+).

Functionally, inactivates the type B streptogramin antibiotics by linearizing the lactone ring at the ester linkage, generating a free phenylglycine carboxylate and converting the threonyl moiety into 2-amino-butenoic acid. This Clostridium beijerinckii (strain ATCC 51743 / NCIMB 8052) (Clostridium acetobutylicum) protein is Virginiamycin B lyase.